The chain runs to 143 residues: Large ribosomal subunit protein uL15 (143 aa).

The disordered stretch occupies residues 1–51 (MELNTIKPASGAKHAKRRVGRGIGSGLGKTAGRGHKGQKSRAGGYHKVGFE). Over residues 21-31 (RGIGSGLGKTA) the composition is skewed to gly residues.

Belongs to the universal ribosomal protein uL15 family. Part of the 50S ribosomal subunit.

In terms of biological role, binds to the 23S rRNA. The sequence is that of Large ribosomal subunit protein uL15 from Methylibium petroleiphilum (strain ATCC BAA-1232 / LMG 22953 / PM1).